The sequence spans 2492 residues: Transcriptional regulator ATRX (2492 aa).

The interval 1–147 (MTAEPMSESK…KDDFKGPEFR (147 aa)) is disordered. K10 is covalently cross-linked (Glycyl lysine isopeptide (Lys-Gly) (interchain with G-Cter in SUMO2)). The segment covering 17–27 (KLHDFLAHSSE) has biased composition (basic and acidic residues). Phosphoserine occurs at positions 25 and 34. A compositionally biased stretch (polar residues) spans 40–57 (MNQNTDKISGSGSNSDMM). Residues 58 to 72 (ENSKEEGTSSSEKSK) show a composition bias toward basic and acidic residues. Y89 is modified (phosphotyrosine). Residues S92 and S112 each carry the phosphoserine modification. Residues 92–108 (SDDEKPLDDETVNEDAS) show a composition bias toward acidic residues. Residues 135-147 (NEDKDDFKGPEFR) are compositionally biased toward basic and acidic residues. Glycyl lysine isopeptide (Lys-Gly) (interchain with G-Cter in SUMO2) cross-links involve residues K138 and K142. Residues 159 to 296 (KRGEDGLHGI…LEQLLQQNKK (138 aa)) enclose the ADD domain. The GATA-type; atypical zinc-finger motif lies at 170 to 206 (SCTACGQQVNHFQKDSIYRHPSLQVLICKNCFKYYMS). S213 is subject to Phosphoserine. Residues 217–272 (DEQCRWCAEGGNLICCDFCHNAFCKKCILRNLGRKELSTIMDENNQWYCYICHPEP) form a PHD-type; atypical zinc finger. K299 is covalently cross-linked (Glycyl lysine isopeptide (Lys-Gly) (interchain with G-Cter in SUMO2)). Position 316 is a phosphoserine (S316). K438 participates in a covalent cross-link: Glycyl lysine isopeptide (Lys-Gly) (interchain with G-Cter in SUMO2). Positions 445–502 (KGEKPCALEKKDISKSEAKLSRKQVDSEHMHQNVPTEEQRTNKSTGGEHKKSDRKEEP) are enriched in basic and acidic residues. Disordered stretches follow at residues 445-516 (KGEK…LDMD) and 535-576 (AMEV…GIKS). Positions 550–567 (SGTEQEVESSSVKLNISS) are enriched in polar residues. Positions 581–594 (KVTKELYVKLTPVS) match the PxVxL motif motif. Phosphothreonine is present on T591. Residues 593-616 (VSLSNSPIKGADCQEVPQDKDGYK) are disordered. Residues S594 and S598 each carry the phosphoserine modification. A Glycyl lysine isopeptide (Lys-Gly) (interchain with G-Cter in SUMO1); alternate cross-link involves residue K623. K623 is covalently cross-linked (Glycyl lysine isopeptide (Lys-Gly) (interchain with G-Cter in SUMO2); alternate). S634 is subject to Phosphoserine. Residues 649–956 (EESDLRRSPR…KHLKTKTCKK (308 aa)) are disordered. Residue T674 is modified to Phosphothreonine. Phosphoserine occurs at positions 675, 677, 729, and 731. The span at 755-777 (NEIHTNHKTLYDLKTQAGKDDKG) shows a compositional bias: basic and acidic residues. Phosphoserine is present on residues S784, S819, S849, S850, S875, and S876. The segment covering 843–864 (NTKDFDSSEDEKHSKKGMDNQG) has biased composition (basic and acidic residues). Over residues 878–887 (DAERKQERET) the composition is skewed to basic and acidic residues. Position 889 is a phosphoserine (S889). Basic and acidic residues-rich tracts occupy residues 894-909 (TVDK…DRLP) and 920-944 (GVDK…ETKE). Basic residues predominate over residues 945–955 (KSKHLKTKTCK). At S962 the chain carries Phosphoserine. Position 967 is an N6-acetyllysine (K967). Residues 968–1004 (FLKKDQSDETSEDDKKQSKKGTEEKKKPSDFKKKVIK) show a composition bias toward basic and acidic residues. A disordered region spans residues 968 to 1479 (FLKKDQSDET…SKSPGKGRKK (512 aa)). At S974 the chain carries Phosphoserine. A Phosphothreonine modification is found at T977. K1004 participates in a covalent cross-link: Glycyl lysine isopeptide (Lys-Gly) (interchain with G-Cter in SUMO2). S1011, S1012, and S1013 each carry phosphoserine. Residues 1015–1027 (GTEKLPEREEICH) are compositionally biased toward basic and acidic residues. The segment covering 1045–1055 (KSKKIRDKTSK) has biased composition (basic residues). A compositionally biased stretch (basic and acidic residues) spans 1056-1082 (KKDELSDYAEKSTGKGDSCDSSEDKKS). Phosphoserine is present on S1061. A Phosphotyrosine modification is found at Y1063. Residues 1090–1102 (EKKRCKLLGKSSR) are compositionally biased toward basic residues. Basic and acidic residues predominate over residues 1103 to 1139 (KRQDCSSSDTEKYSMKEDGCNSSDKRLKRIELRERRN). Residues 1167-1195 (KKKQRTSSKKKAVIVKEKKRNSLRTSTKR) are compositionally biased toward basic residues. Residues 1189-1326 (LRTSTKRKQA…KNQVNSESDS (138 aa)) form an interaction with DAXX region. Positions 1233–1246 (LVLSSHTGFCQSSG) are enriched in polar residues. S1244, S1245, and S1253 each carry phosphoserine. Residues 1267–1281 (PENRIAKKMLLEEIK) are compositionally biased toward basic and acidic residues. Over residues 1286–1297 (SDEDGSSDDEPE) the composition is skewed to acidic residues. Over residues 1298-1308 (EGKKRTGKQNE) the composition is skewed to basic and acidic residues. A phosphoserine mark is found at S1322, S1324, and S1326. Positions 1334–1345 (PRYRHRLLRHKL) are enriched in basic residues. Phosphoserine occurs at positions 1348 and 1352. Composition is skewed to basic and acidic residues over residues 1353–1368 (GEEK…EVKG) and 1408–1417 (KKAELEENQR). Basic residues predominate over residues 1419-1428 (YKQKKKRRRI). The span at 1443–1468 (EEEEEEKEEEEEEEEEEEEEEEDEND) shows a compositional bias: acidic residues. K1488 participates in a covalent cross-link: Glycyl lysine isopeptide (Lys-Gly) (interchain with G-Cter in SUMO2). At S1527 the chain carries Phosphoserine. T1529 carries the phosphothreonine modification. The Helicase ATP-binding domain occupies 1581–1768 (KTKKSPGSGC…HCMVNFIKEN (188 aa)). 1594 to 1601 (HCMGLGKT) serves as a coordination point for ATP. The short motif at 1719-1722 (DEGH) is the DEGH box element. Phosphoserine is present on residues S1906 and S1913. The disordered stretch occupies residues 1913–2000 (SDSDETSMSL…SSNPSSPAPD (88 aa)). Basic residues predominate over residues 1929–1938 (KKKKKGKKGK). A Glycyl lysine isopeptide (Lys-Gly) (interchain with G-Cter in SUMO1); alternate cross-link involves residue K1982. A Glycyl lysine isopeptide (Lys-Gly) (interchain with G-Cter in SUMO2); alternate cross-link involves residue K1982. A Glycyl lysine isopeptide (Lys-Gly) (interchain with G-Cter in SUMO2) cross-link involves residue K1987. Residues 1990-1999 (SSSNPSSPAP) are compositionally biased toward low complexity. Phosphoserine occurs at positions 1992 and 1996. Residues 2010–2280 (DAEVLEHSGK…RKAAWAEYEA (271 aa)) are interaction with MECP2. Residues 2025–2205 (EILRMAEEIG…ERHFTMNELT (181 aa)) enclose the Helicase C-terminal domain. The residue at position 2220 (S2220) is a Phosphoserine. Positions 2462–2492 (PVAGGMQPPPLQRAPPPMRSKNPGPSQGKSM) are disordered. Residues 2468-2479 (QPPPLQRAPPPM) are compositionally biased toward pro residues. 2 positions are modified to omega-N-methylarginine: R2474 and R2480.

Belongs to the SNF2/RAD54 helicase family. As to quaternary structure, interacts with DAXX to form the chromatin remodeling complex ATRX:DAXX. Probably binds EZH2. Binds annexin V in a calcium and phosphatidylcholine/phosphatidylserine-dependent manner. Interacts directly with CBX5 via the PxVxL motif. Interacts with RAD50, MRE11 and NBN; indicative for an association with the MRN complex. Interacts with histone MACROH2A1. Interacts with histone H3 peptides methylated at 'Lys-10' with preferences H3K9me3 &gt; H3K9me2 &gt; H3K9me1. Interacts with histone H3 peptides unmethylated at 'Lys-5' (H3K4me0). Interacts with MECP2, SMC1 and SMC3. Interacts with SETDB1, TRIM28 and ZNF274. Phosphorylated at serine residues during mitose. Phosphorylation may promote the release from the nuclear matrix and progression to mitosis. In terms of tissue distribution, ubiquitous.

It localises to the nucleus. It is found in the chromosome. The protein localises to the telomere. The protein resides in the PML body. It carries out the reaction ATP + H2O = ADP + phosphate + H(+). Functionally, involved in transcriptional regulation and chromatin remodeling. Facilitates DNA replication in multiple cellular environments and is required for efficient replication of a subset of genomic loci. Binds to DNA tandem repeat sequences in both telomeres and euchromatin and in vitro binds DNA quadruplex structures. May help stabilizing G-rich regions into regular chromatin structures by remodeling G4 DNA and incorporating H3.3-containing nucleosomes. Catalytic component of the chromatin remodeling complex ATRX:DAXX which has ATP-dependent DNA translocase activity and catalyzes the replication-independent deposition of histone H3.3 in pericentric DNA repeats outside S-phase and telomeres, and the in vitro remodeling of H3.3-containing nucleosomes. Its heterochromatin targeting is proposed to involve a combinatorial readout of histone H3 modifications (specifically methylation states of H3K9 and H3K4) and association with CBX5. Involved in maintaining telomere structural integrity in embryonic stem cells which probably implies recruitment of CBX5 to telomeres. Reports on the involvement in transcriptional regulation of telomeric repeat-containing RNA (TERRA) are conflicting; according to a report, it is not sufficient to decrease chromatin condensation at telomeres nor to increase expression of telomeric RNA in fibroblasts. May be involved in telomere maintenance via recombination in ALT (alternative lengthening of telomeres) cell lines. Acts as a negative regulator of chromatin incorporation of transcriptionally repressive histone MACROH2A1, particularily at telomeres and the alpha-globin cluster in erythroleukemic cells. Participates in the allele-specific gene expression at the imprinted IGF2/H19 gene locus. On the maternal allele, required for the chromatin occupancy of SMC1 and CTCTF within the H19 imprinting control region (ICR) and involved in esatblishment of histone tails modifications in the ICR. May be involved in brain development and facial morphogenesis. Binds to zinc-finger coding genes with atypical chromatin signatures and regulates its H3K9me3 levels. Forms a complex with ZNF274, TRIM28 and SETDB1 to facilitate the deposition and maintenance of H3K9me3 at the 3' exons of zinc-finger genes. In Homo sapiens (Human), this protein is Transcriptional regulator ATRX (ATRX).